Consider the following 317-residue polypeptide: Protein lifeguard 2 (317 aa).

The tract at residues 1–54 is disordered; that stretch reads MTQGKLSVANKAPGTEGQQHQANGEKKDAPAVPSAPPSYEEATSGEGLKAGTFP. The next 3 membrane-spanning stretches (helical) occupy residues 107–127, 139–159, and 166–186; these read VYTI…LFTF, PGWY…LACC, and FPWN…LTGM. N-linked (GlcNAc...) asparagine glycosylation is present at Asn-192. 4 helical membrane passes run 195 to 215, 226 to 246, 252 to 272, and 291 to 311; these read SVLL…IFSF, GVLF…AVLL, PWLH…FLAF, and IFGA…FLQL.

It belongs to the BI1 family. LFG subfamily. In terms of assembly, interacts with FAS/TNFRSF6 and BAX. In terms of tissue distribution, brain. Highly expressed in cerebellum, also found in cortex, olfactory bulb, and hippocampus.

It localises to the cell membrane. The protein resides in the membrane raft. Its subcellular location is the postsynaptic cell membrane. In terms of biological role, antiapoptotic protein which protects cells uniquely from Fas-induced apoptosis. Regulates Fas-mediated apoptosis in neurons by interfering with caspase-8 activation. Plays a role in cerebellar development by affecting cerebellar size, internal granular layer (IGL) thickness, and Purkinje cell (PC) development. This is Protein lifeguard 2 (Faim2) from Mus musculus (Mouse).